The sequence spans 468 residues: MKKVNHWINGKNVAGNDYFLTTNPATGEVLADVASGGEAEINQAVATAKEAFPKWANLPMKERARLMRRLGDLIDQNVPEIAAMETADTGLPIHQTKNVLIPRASHNFEFFAEVCQQMNGKTYPVDDKMLNYTLVQPVGVCALVSPWNVPFMTATWKVAPCLALGITAVLKMSELSPLTADRLGELALEAGIPAGVLNVVQGYGATAGDALVRHHDVRAVSFTGGTATGRNIMKNAGLKKYSMELGGKSPVLIFEDADIERALDAALFTIFSINGERCTAGSRIFIQQSIYPEFVKFAERANRVRVGDPTDPNTQVGALISQQHWEKVSGYIRLGIEEGATLLAGGPDKPSDLPAHLKGGNFLRPTVLADVDNRMRVAQEEIFGPVACLLPFKDEAEALRLANDVEYGLASYIWTQDVSKVLRLARGIEAGMVFVNTQFVRDLRHAFGGVKPRTGREGGGYSSKCSRK.

The active site involves Glu244. Cys278 serves as the catalytic Nucleophile.

It belongs to the aldehyde dehydrogenase family. Homodimer.

The enzyme catalyses 2-hydroxy-5-carboxymethylmuconate semialdehyde + NAD(+) + H2O = (2E,4Z)-5-hydroxypenta-2,4-diene-1,2,5-tricarboxylate + NADH + 2 H(+). Its pathway is aromatic compound metabolism; 4-hydroxyphenylacetate degradation; pyruvate and succinate semialdehyde from 4-hydroxyphenylacetate: step 3/7. Its function is as follows. Catalyzes the conversion of 5-carboxymethyl-2-hydroxy-muconic semialdehyde (CHMS) into 5-carboxymethyl-2-hydroxy-muconic acid (CHM or (2E,4Z)-5-hydroxypenta-2,4-diene-1,2,5-tricarboxylate). Is involved in a meta-cleavage pathway for the catabolism of 4-hydroxyphenylacetate (4-HPA) via homoprotocatechuate (HPC or 3,4-dihydroxyphenylacetate). In Escherichia coli, this protein is 5-carboxymethyl-2-hydroxymuconate semialdehyde dehydrogenase.